A 561-amino-acid polypeptide reads, in one-letter code: Rho guanine nucleotide exchange factor 9 (561 aa).

The region spanning 53–112 (DSIVSAEAVWDHVTMANRELAFKAGDVIKVLDASNKDWWWGQIDDEEGWFPASFVRLWVN) is the SH3 domain. The tract at residues 145-155 (RDQMRANVINE) is interaction with GPHN. The region spanning 148–332 (MRANVINEIM…RNVTQQINER (185 aa)) is the DH domain. Positions 363–470 (ELIYTGEMAW…WLRAFREERK (108 aa)) constitute a PH domain. A disordered region spans residues 499–524 (KQKGVNSARSVPPSYPPPQDPLNQGQ). At Ser547 the chain carries Phosphoserine.

Interacts with GPHN.

The protein localises to the cytoplasm. It localises to the postsynaptic density. Functionally, acts as a guanine nucleotide exchange factor (GEF) for CDC42. Promotes formation of GPHN clusters. The polypeptide is Rho guanine nucleotide exchange factor 9 (ARHGEF9) (Bos taurus (Bovine)).